We begin with the raw amino-acid sequence, 706 residues long: Choline transporter-like protein 2 (706 aa).

The Cytoplasmic segment spans residues 1–33 (MGKDSQNYYGKHGTPQKYDPTFKGPIYNRGCTD). At T14 the chain carries Phosphothreonine. A helical transmembrane segment spans residues 34–54 (VICCVLLFLAIVGYVAVGIIA). At 55-232 (WTHGDPRKVI…QIFEDYTVSW (178 aa)) the chain is on the extracellular side. 2 N-linked (GlcNAc...) asparagine glycosylation sites follow: N187 and N200. A helical transmembrane segment spans residues 233-253 (YWIIIGLVIAMVLSLLFIVLL). The Cytoplasmic segment spans residues 254 to 256 (RFL). A helical membrane pass occupies residues 257–277 (AGIMVWVMIVMVILVLGYGIF). Over 278 to 315 (HCYMEYSRLRGEAGSDVSLVDLGFQTDLRVYLHLRQTW) the chain is Extracellular. A helical transmembrane segment spans residues 316 to 336 (MAFMIILSILEVVIILLLIFL). At 337–364 (RKRILIAIALIKEASRAVGHVMCSLLYP) the chain is on the cytoplasmic side. The chain crosses the membrane as a helical span at residues 365–385 (LVTFFLLCLCIAYWASTSVFL). Topologically, residues 386–454 (STSNTAVYKV…LQIFNAFMFF (69 aa)) are extracellular. Residue N417 is glycosylated (N-linked (GlcNAc...) asparagine). The helical transmembrane segment at 455–477 (WLANFVLALGQVTLAGAFASYYW) threads the bilayer. The Cytoplasmic portion of the chain corresponds to 478–504 (AMRKPDDMPAFPLFSAFGRALRYHTGS). Residues 505–525 (LAFGSLILAIVQIIRVMLEYL) traverse the membrane as a helical segment. The Extracellular segment spans residues 526 to 563 (DQRLKAAQNKFAKFLMVCLKCCFWCLEKFIKFLNRNAY). A helical membrane pass occupies residues 564-584 (IMIAIYGTNFCTSARNAFFLL). Residues 585 to 599 (MRNIIRVAVLDKVTD) are Cytoplasmic-facing. The helical transmembrane segment at 600-620 (FLFLLGKLLIVGSVGILAFFF) threads the bilayer. The Extracellular segment spans residues 621–638 (FTHRIRIVQDTAPPLNYY). Residues 639-659 (WVPILTVIIGSYLIAHGFFSV) traverse the membrane as a helical segment. Residues 660–706 (YGMCVDTLFLCFLEDLERNDGSAERPYFMSSTLKKLLNKTNKKVAES) lie on the Cytoplasmic side of the membrane.

The protein belongs to the CTL (choline transporter-like) family. In terms of assembly, interacts with COCH. Glycosylated, glycosylation differs from tissue to tissue. The molecular mass of the mature glycosylated protein is highest in kidney, followed by lung, colon and spleen, then brain and tongue. In terms of tissue distribution, expressed at high levels in lung, colon, inner ear and spleen (at protein level). Progressively lower levels in brain, tongue, liver and kidney (at protein level). In the kidney, prominent expression in glomeruli in the lining of Bowman's capsule and on the mesangial cells adjacent to the vessels within the glomerulus (at protein level). Strongly expressed on the membranes of splenocytes and in lung parenchyme (at protein level). Expressed at higher levels than isoform 2 in colon, heart, kidney, lung, cochlea, tongue and muscle, as well as in the inner ear. As to expression, predominantly expressed in brain, liver and spleen.

The protein resides in the cell membrane. It is found in the mitochondrion outer membrane. The catalysed reaction is choline(out) + n H(+)(in) = choline(in) + n H(+)(out). The enzyme catalyses ethanolamine(out) + n H(+)(in) = ethanolamine(in) + n H(+)(out). Its function is as follows. Choline/H+ antiporter, mainly in mitochodria. Also acts as a low-affinity ethanolamine/H+ antiporter, regulating the supply of extracellular ethanolamine (Etn) for the CDP-Etn pathway, redistribute intracellular Etn and balance the CDP-Cho and CDP-Etn arms of the Kennedy pathway. The chain is Choline transporter-like protein 2 (Slc44a2) from Mus musculus (Mouse).